Consider the following 846-residue polypeptide: Aminopeptidase N (846 aa).

Substrate is bound by residues Glu120 and 252-256 (GAMEN). His288 serves as a coordination point for Zn(2+). Glu289 functions as the Proton acceptor in the catalytic mechanism. Zn(2+) contacts are provided by His292 and Glu311.

This sequence belongs to the peptidase M1 family. In terms of assembly, monomer. Zn(2+) serves as cofactor.

It localises to the cytoplasm. The catalysed reaction is Release of an N-terminal amino acid, Xaa-|-Yaa- from a peptide, amide or arylamide. Xaa is preferably Ala, but may be most amino acids including Pro (slow action). When a terminal hydrophobic residue is followed by a prolyl residue, the two may be released as an intact Xaa-Pro dipeptide.. Aminopeptidase with broad substrate specificity to several peptides. It has more affinity for oligopeptides than for dipeptides. It plays an essential role in the metabolism, it may be involved in nitrogen supply or protein turnover. This is Aminopeptidase N (pepN) from Lactococcus lactis subsp. cremoris (strain MG1363).